The chain runs to 290 residues: Cilia- and flagella-associated protein 298 (290 aa).

Phosphotyrosine is present on tyrosine 264.

The protein belongs to the CFAP298 family. Interacts with ZMYND10.

Its subcellular location is the cytoplasm. The protein resides in the cytoskeleton. It localises to the cilium basal body. In terms of biological role, plays a role in motile cilium function, possibly by acting on outer dynein arm assembly. Seems to be important for initiation rather than maintenance of cilium motility. Required for correct positioning of the cilium at the apical cell surface, suggesting an additional role in the planar cell polarity (PCP) pathway. May suppress canonical Wnt signaling activity. In Homo sapiens (Human), this protein is Cilia- and flagella-associated protein 298.